We begin with the raw amino-acid sequence, 203 residues long: Snake venom metalloproteinase adamalysin-2 (203 aa).

A Peptidase M12B domain is found at arginine 7 to proline 203. Ca(2+) contacts are provided by glutamate 10 and aspartate 94. 2 cysteine pairs are disulfide-bonded: cysteine 118/cysteine 198 and cysteine 158/cysteine 165. Residue histidine 143 participates in Zn(2+) binding. Residue glutamate 144 is part of the active site. Zn(2+)-binding residues include histidine 147 and histidine 153. Residues cysteine 198 and asparagine 201 each coordinate Ca(2+).

Belongs to the venom metalloproteinase (M12B) family. P-I subfamily. As to quaternary structure, monomer. Requires Zn(2+) as cofactor. As to expression, expressed by the venom gland.

It localises to the secreted. The catalysed reaction is Cleavage of 1-Phe-|-Val-2, 5-His-|-Leu-6, 14-Ala-|-Leu-15, 15-Leu-|-Tyr-16, and 16-Tyr-|-Leu-17 of insulin B chain.. In terms of biological role, has no significant hemorrhagic activity, but inactivates serpins by limited proteolysis of their reactive-site loops. The polypeptide is Snake venom metalloproteinase adamalysin-2 (Crotalus adamanteus (Eastern diamondback rattlesnake)).